The chain runs to 404 residues: Probable tRNA sulfurtransferase (404 aa).

In terms of domain architecture, THUMP spans 60 to 165 (QPIVEALKLV…DEAAYISYEE (106 aa)). Residues 183-184 (ML), 208-209 (HF), R265, G287, and Q296 each bind ATP.

Belongs to the ThiI family.

The protein resides in the cytoplasm. The catalysed reaction is [ThiI sulfur-carrier protein]-S-sulfanyl-L-cysteine + a uridine in tRNA + 2 reduced [2Fe-2S]-[ferredoxin] + ATP + H(+) = [ThiI sulfur-carrier protein]-L-cysteine + a 4-thiouridine in tRNA + 2 oxidized [2Fe-2S]-[ferredoxin] + AMP + diphosphate. The enzyme catalyses [ThiS sulfur-carrier protein]-C-terminal Gly-Gly-AMP + S-sulfanyl-L-cysteinyl-[cysteine desulfurase] + AH2 = [ThiS sulfur-carrier protein]-C-terminal-Gly-aminoethanethioate + L-cysteinyl-[cysteine desulfurase] + A + AMP + 2 H(+). It functions in the pathway cofactor biosynthesis; thiamine diphosphate biosynthesis. In terms of biological role, catalyzes the ATP-dependent transfer of a sulfur to tRNA to produce 4-thiouridine in position 8 of tRNAs, which functions as a near-UV photosensor. Also catalyzes the transfer of sulfur to the sulfur carrier protein ThiS, forming ThiS-thiocarboxylate. This is a step in the synthesis of thiazole, in the thiamine biosynthesis pathway. The sulfur is donated as persulfide by IscS. The protein is Probable tRNA sulfurtransferase of Streptococcus pyogenes serotype M1.